We begin with the raw amino-acid sequence, 159 residues long: Cytochrome b6-f complex subunit 4 (159 aa).

Transmembrane regions (helical) follow at residues 36–56, 95–115, and 131–151; these read LLYI…GLAV, LLGV…PFLE, and TVFL…TLPI.

The protein belongs to the cytochrome b family. PetD subfamily. In terms of assembly, the 4 large subunits of the cytochrome b6-f complex are cytochrome b6, subunit IV (17 kDa polypeptide, petD), cytochrome f and the Rieske protein, while the 4 small subunits are petG, petL, petM and petN. The complex functions as a dimer.

It is found in the plastid. The protein resides in the chloroplast thylakoid membrane. Component of the cytochrome b6-f complex, which mediates electron transfer between photosystem II (PSII) and photosystem I (PSI), cyclic electron flow around PSI, and state transitions. The protein is Cytochrome b6-f complex subunit 4 of Piper cenocladum (Ant piper).